Reading from the N-terminus, the 366-residue chain is Dehydrogenase aclE (366 aa).

Positions 1–19 (MSKRIRLGIVGLSADPSHC) are cleaved as a signal peptide. N-linked (GlcNAc...) asparagine glycosylation is present at Asn-330.

This sequence belongs to the Gfo/Idh/MocA family.

It functions in the pathway mycotoxin biosynthesis. In terms of biological role, dehydrogenase; part of the gene cluster that mediates the biosynthesis of aspirochlorine (or antibiotic A30641), an unusual halogenated spiro compound with distinctive antifungal properties due to selective inhibition of protein biosynthesis, and which is also active against bacteria, viruses, and murine tumor cells. The non-ribosomal peptide synthetase (NRPS) aclP is responsible the formation of the diketopiperazine (DKP) core from the condensation of 2 phenylalanine residues. One Phe residue is tailored into chlorotyrosine by hydroxylation and chlorination, whereas the second Phe undergoes an unprecedented C-C bond cleavage to be converted into glycine. After formation of the DKP, sulfur is incorporated into the DKP by conjugation with glutathione by aclG, followed by its stepwise degradation to the thiol by aclI, aclJ and aclK, and the dithiol oxidation by aclT. In addition, oxygenases (aclB, aclC, aclL and aclO) and O-methyltransferases (aclM and aclU) act as tailoring enzymes to produce the intermediate dechloroaspirochlorine. Ultimately, chlorination of dechloroaspirochlorine by the halogenase aclH is the last step in the aspirochlorine pathway. The protein is Dehydrogenase aclE of Aspergillus oryzae (strain ATCC 42149 / RIB 40) (Yellow koji mold).